A 246-amino-acid chain; its full sequence is MyoD family inhibitor domain-containing protein (246 aa).

Disordered regions lie at residues 1-93 (MSQE…EEET) and 134-164 (KIQSSLSVSSDGSKKSKESSAYSQKPSASPE). Residues 1–170 (MSQEREPFSP…ASPEDGCVHC (170 aa)) lie on the Extracellular side of the membrane. Over residues 63–87 (EDNSNSQPIKAQPQRLPQPNTSALE) the composition is skewed to polar residues. The region spanning 74–246 (QPQRLPQPNT…MECCGICFPS (173 aa)) is the MDFI domain. A helical transmembrane segment spans residues 171–188 (ILTCLFCEFLTLCNIVVG). The Cytoplasmic portion of the chain corresponds to 189–246 (QASCGICTSEACCCCCTEEMGDDCNCPCDMDCGIMDACCESSDCLEICMECCGICFPS).

This sequence belongs to the MDFI family. As to expression, expressed broadly at a low level in the early embryo.

The protein resides in the cytoplasm. Its subcellular location is the cell membrane. It is found in the secreted. Functionally, required to control the activity of various transcription factors through their sequestration in the cytoplasm. Retains nuclear Zic proteins in the cytoplasm and inhibits their transcriptional activation. Required for dorsoanterior development. Necessary for siamois to activate downstream target genes, including gsc, during execution of the dorsal organizer program. Also regulates the transcriptional activity of TCF7L1/TCF3 by interacting directly with TCF7L1/TCF3 and preventing it from binding DNA. Involved in the development of lymphatic vessel valves. It is required to promote lymphatic endothelial cell migration, in a process that involves down-regulation of integrin beta 1 activation and control of cell adhesion to the extracellular matrix. In Xenopus laevis (African clawed frog), this protein is MyoD family inhibitor domain-containing protein.